A 330-amino-acid chain; its full sequence is Homeobox protein Hox-C13 (330 aa).

Over residues 30 to 47 (GGGGGGGGGTGGAGGGCS) the composition is skewed to gly residues. Residues 30-50 (GGGGGGGGGTGGAGGGCSGAS) form a disordered region. Positions 260 to 319 (GRKKRVPYTKVQLKELEKEYAASKFITKEKRRRISATTNLSERQVTIWFQNRRVKEKKVV) form a DNA-binding region, homeobox.

The protein belongs to the Abd-B homeobox family.

It localises to the nucleus. Functionally, transcription factor which plays a role in hair follicle differentiation. Regulates FOXQ1 expression and that of other hair-specific genes. This is Homeobox protein Hox-C13 (HOXC13) from Homo sapiens (Human).